A 125-amino-acid chain; its full sequence is Cyclic diguanosine monophosphate-binding protein PA4608 (125 aa).

6–13 (DERRRFHR) contacts 3',3'-c-di-GMP. The 97-residue stretch at 7–103 (ERRRFHRIAF…SISHLRRLVE (97 aa)) folds into the PilZ domain. The RXXXR motif; surrounds the surface of the c-di-GMP binding site motif lies at 9-13 (RRFHR). The short motif at 35 to 40 (DVSLHG) is the DXSXXG motif; surrounds the surface of the c-di-GMP binding site element. Residue Trp-77 participates in 3',3'-c-di-GMP binding.

Monomer in both c-di-GMP-bound and free forms.

In terms of biological role, binds the second messenger bis-(3'-5') cyclic dimeric guanosine monophosphate (c-di-GMP). Can bind two c-di-GMP molecules per monomer. May play a role in bacterial second-messenger regulated processes. Binding to c-di-GMP induces a conformational change of the C- and N-termini resulting in the exposure of a highly negative surface on one side of the protein to a possible effector protein. The protein is Cyclic diguanosine monophosphate-binding protein PA4608 of Pseudomonas aeruginosa (strain ATCC 15692 / DSM 22644 / CIP 104116 / JCM 14847 / LMG 12228 / 1C / PRS 101 / PAO1).